The chain runs to 105 residues: Late embryogenesis abundant protein Lea5-D (105 aa).

The disordered stretch occupies residues 48 to 67; the sequence is KVERRDAMKESSSSETRAYS. The segment covering 57-67 has biased composition (low complexity); it reads ESSSSETRAYS.

It belongs to the LEA type 3 family.

This chain is Late embryogenesis abundant protein Lea5-D (LEA5-D), found in Gossypium hirsutum (Upland cotton).